The primary structure comprises 74 residues: DNA-directed RNA polymerase subunit omega (74 aa).

This sequence belongs to the RNA polymerase subunit omega family. In terms of assembly, the RNAP catalytic core consists of 2 alpha, 1 beta, 1 beta' and 1 omega subunit. When a sigma factor is associated with the core the holoenzyme is formed, which can initiate transcription.

The enzyme catalyses RNA(n) + a ribonucleoside 5'-triphosphate = RNA(n+1) + diphosphate. Promotes RNA polymerase assembly. Latches the N- and C-terminal regions of the beta' subunit thereby facilitating its interaction with the beta and alpha subunits. The polypeptide is DNA-directed RNA polymerase subunit omega (Lactobacillus acidophilus (strain ATCC 700396 / NCK56 / N2 / NCFM)).